Here is a 484-residue protein sequence, read N- to C-terminus: Argininosuccinate lyase (484 aa).

The protein belongs to the lyase 1 family. Argininosuccinate lyase subfamily.

The protein resides in the cytoplasm. The enzyme catalyses 2-(N(omega)-L-arginino)succinate = fumarate + L-arginine. The protein operates within amino-acid biosynthesis; L-arginine biosynthesis; L-arginine from L-ornithine and carbamoyl phosphate: step 3/3. The sequence is that of Argininosuccinate lyase from Methanocaldococcus jannaschii (strain ATCC 43067 / DSM 2661 / JAL-1 / JCM 10045 / NBRC 100440) (Methanococcus jannaschii).